Reading from the N-terminus, the 254-residue chain is Alcohol dehydrogenase (254 aa).

10-33 serves as a coordination point for NAD(+); sequence FVAGLGGIGLDTSRELVKRNLKNL. Ser138 is a binding site for substrate. Tyr151 (proton acceptor) is an active-site residue.

Belongs to the short-chain dehydrogenases/reductases (SDR) family. In terms of assembly, homodimer.

The enzyme catalyses a primary alcohol + NAD(+) = an aldehyde + NADH + H(+). It carries out the reaction a secondary alcohol + NAD(+) = a ketone + NADH + H(+). This chain is Alcohol dehydrogenase (Adh), found in Drosophila pseudoobscura pseudoobscura (Fruit fly).